A 193-amino-acid polypeptide reads, in one-letter code: ATP-dependent Clp protease proteolytic subunit (193 aa).

Residue serine 98 is the Nucleophile of the active site. The active site involves histidine 123.

The protein belongs to the peptidase S14 family. In terms of assembly, fourteen ClpP subunits assemble into 2 heptameric rings which stack back to back to give a disk-like structure with a central cavity, resembling the structure of eukaryotic proteasomes.

It localises to the cytoplasm. It catalyses the reaction Hydrolysis of proteins to small peptides in the presence of ATP and magnesium. alpha-casein is the usual test substrate. In the absence of ATP, only oligopeptides shorter than five residues are hydrolyzed (such as succinyl-Leu-Tyr-|-NHMec, and Leu-Tyr-Leu-|-Tyr-Trp, in which cleavage of the -Tyr-|-Leu- and -Tyr-|-Trp bonds also occurs).. In terms of biological role, cleaves peptides in various proteins in a process that requires ATP hydrolysis. Has a chymotrypsin-like activity. Plays a major role in the degradation of misfolded proteins. The protein is ATP-dependent Clp protease proteolytic subunit of Haemophilus influenzae (strain PittEE).